The following is a 172-amino-acid chain: Stellate protein CG33239/CG33241 (172 aa).

Belongs to the casein kinase 2 subunit beta family. Interacts in vitro with the casein kinase 2 alpha subunit (CkII-alpha). The relevance of such interaction is however unclear in vivo. In terms of tissue distribution, probably not expressed in wild-type flies. In males lacking the Y chromosome, it is testis-specific and constitutes the main component of star-shaped crystals.

In terms of biological role, unknown. In males lacking the Y chromosome, its strong overexpression leads to the appearance of proteinaceous star-shaped crystals in the primary spermatocytes causing meiotic drive, possibly by interfering with normal casein kinase 2 activity. This is Stellate protein CG33239/CG33241 (Ste:CG33239) from Drosophila melanogaster (Fruit fly).